A 256-amino-acid polypeptide reads, in one-letter code: Type III pantothenate kinase (256 aa).

Asp-6–Lys-13 provides a ligand contact to ATP. Residues Tyr-90 and Gly-97–Arg-100 each bind substrate. Asp-99 functions as the Proton acceptor in the catalytic mechanism. Thr-123 contacts ATP. Substrate is bound at residue Thr-187.

Belongs to the type III pantothenate kinase family. Homodimer. NH4(+) serves as cofactor. K(+) is required as a cofactor.

It is found in the cytoplasm. The catalysed reaction is (R)-pantothenate + ATP = (R)-4'-phosphopantothenate + ADP + H(+). It functions in the pathway cofactor biosynthesis; coenzyme A biosynthesis; CoA from (R)-pantothenate: step 1/5. Its function is as follows. Catalyzes the phosphorylation of pantothenate (Pan), the first step in CoA biosynthesis. The sequence is that of Type III pantothenate kinase from Burkholderia mallei (strain ATCC 23344).